The following is a 135-amino-acid chain: Large ribosomal subunit protein uL16c (135 aa).

The protein belongs to the universal ribosomal protein uL16 family. As to quaternary structure, part of the 50S ribosomal subunit.

It localises to the plastid. The protein resides in the chloroplast. This chain is Large ribosomal subunit protein uL16c, found in Gossypium barbadense (Sea Island cotton).